Here is a 156-residue protein sequence, read N- to C-terminus: Snaclec A15 (156 aa).

An N-terminal signal peptide occupies residues 1–23; that stretch reads MGRFIFVRFGLLVVFLSLSGTGA. Intrachain disulfides connect Cys27–Cys38, Cys55–Cys152, and Cys127–Cys144. One can recognise a C-type lectin domain in the interval 34–153; that stretch reads YDQHCYKAFD…CGDDYPFVCK (120 aa). The N-linked (GlcNAc...) asparagine glycan is linked to Asn141.

This sequence belongs to the snaclec family. As to quaternary structure, heterodimer; disulfide-linked. Expressed by the venom gland.

The protein resides in the secreted. Its function is as follows. Interferes with one step of hemostasis (modulation of platelet aggregation, or coagulation cascade, for example). This is Snaclec A15 from Macrovipera lebetinus (Levantine viper).